Consider the following 357-residue polypeptide: tRNA pseudouridine synthase B (357 aa).

Asp42 serves as the catalytic Nucleophile.

The protein belongs to the pseudouridine synthase TruB family. Type 1 subfamily.

The enzyme catalyses uridine(55) in tRNA = pseudouridine(55) in tRNA. In terms of biological role, responsible for synthesis of pseudouridine from uracil-55 in the psi GC loop of transfer RNAs. The sequence is that of tRNA pseudouridine synthase B from Treponema denticola (strain ATCC 35405 / DSM 14222 / CIP 103919 / JCM 8153 / KCTC 15104).